We begin with the raw amino-acid sequence, 113 residues long: Ribulose bisphosphate carboxylase small subunit (113 aa).

Belongs to the RuBisCO small chain family. As to quaternary structure, heterohexadecamer of 8 large and 8 small subunits. Forms a CsoS2-CsoS1-RuBisCO complex.

The protein localises to the carboxysome. RuBisCO catalyzes two reactions: the carboxylation of D-ribulose 1,5-bisphosphate, the primary event in carbon dioxide fixation, as well as the oxidative fragmentation of the pentose substrate in the photorespiration process. Both reactions occur simultaneously and in competition at the same active site. Although the small subunit is not catalytic it is essential for maximal activity. There are estimated to be 152 RuBisCO holoenzymes per carboxysome. The chain is Ribulose bisphosphate carboxylase small subunit from Prochlorococcus marinus subsp. pastoris (strain CCMP1986 / NIES-2087 / MED4).